Consider the following 112-residue polypeptide: UPF0122 protein CPF_1968 (112 aa).

Belongs to the UPF0122 family.

Might take part in the signal recognition particle (SRP) pathway. This is inferred from the conservation of its genetic proximity to ftsY/ffh. May be a regulatory protein. The polypeptide is UPF0122 protein CPF_1968 (Clostridium perfringens (strain ATCC 13124 / DSM 756 / JCM 1290 / NCIMB 6125 / NCTC 8237 / Type A)).